We begin with the raw amino-acid sequence, 320 residues long: tRNA uridine(34) hydroxylase (320 aa).

Positions 123–217 (EDENTVILDA…YGKDPETKGL (95 aa)) constitute a Rhodanese domain. Residue Cys-177 is the Cysteine persulfide intermediate of the active site.

Belongs to the TrhO family.

The enzyme catalyses uridine(34) in tRNA + AH2 + O2 = 5-hydroxyuridine(34) in tRNA + A + H2O. In terms of biological role, catalyzes oxygen-dependent 5-hydroxyuridine (ho5U) modification at position 34 in tRNAs. The polypeptide is tRNA uridine(34) hydroxylase (Staphylococcus epidermidis (strain ATCC 35984 / DSM 28319 / BCRC 17069 / CCUG 31568 / BM 3577 / RP62A)).